We begin with the raw amino-acid sequence, 389 residues long: S-adenosylmethionine synthase (389 aa).

An ATP-binding site is contributed by His15. Asp17 serves as a coordination point for Mg(2+). Glu43 is a K(+) binding site. L-methionine contacts are provided by Glu56 and Gln99. A flexible loop region spans residues 99–109; that stretch reads QSPDIAQGVNE. Residues 166-168, 234-235, Asp243, 249-250, Ala266, and Lys270 contribute to the ATP site; these read DAK, RF, and RK. Residue Asp243 participates in L-methionine binding. Lys274 is an L-methionine binding site.

It belongs to the AdoMet synthase family. As to quaternary structure, homotetramer; dimer of dimers. Requires Mg(2+) as cofactor. The cofactor is K(+).

It is found in the cytoplasm. The catalysed reaction is L-methionine + ATP + H2O = S-adenosyl-L-methionine + phosphate + diphosphate. It functions in the pathway amino-acid biosynthesis; S-adenosyl-L-methionine biosynthesis; S-adenosyl-L-methionine from L-methionine: step 1/1. Functionally, catalyzes the formation of S-adenosylmethionine (AdoMet) from methionine and ATP. The overall synthetic reaction is composed of two sequential steps, AdoMet formation and the subsequent tripolyphosphate hydrolysis which occurs prior to release of AdoMet from the enzyme. This Neisseria gonorrhoeae (strain NCCP11945) protein is S-adenosylmethionine synthase.